The primary structure comprises 487 residues: Betaine aldehyde dehydrogenase (487 aa).

K(+) contacts are provided by S26 and D93. NAD(+) is bound at residue 150 to 152 (GAW). K162 acts as the Charge relay system in catalysis. NAD(+)-binding positions include 176-179 (KPSE) and 229-232 (SVPT). Residue L244 coordinates K(+). The active-site Proton acceptor is E250. Residues G252, C284, and E384 each contribute to the NAD(+) site. C284 serves as the catalytic Nucleophile. Residue C284 is modified to Cysteine sulfenic acid (-SOH). K454 and G457 together coordinate K(+). E461 acts as the Charge relay system in catalysis.

It belongs to the aldehyde dehydrogenase family. As to quaternary structure, dimer of dimers. The cofactor is K(+).

It carries out the reaction betaine aldehyde + NAD(+) + H2O = glycine betaine + NADH + 2 H(+). It participates in amine and polyamine biosynthesis; betaine biosynthesis via choline pathway; betaine from betaine aldehyde: step 1/1. Its function is as follows. Involved in the biosynthesis of the osmoprotectant glycine betaine. Catalyzes the irreversible oxidation of betaine aldehyde to the corresponding acid. This is Betaine aldehyde dehydrogenase from Rhizobium johnstonii (strain DSM 114642 / LMG 32736 / 3841) (Rhizobium leguminosarum bv. viciae).